Consider the following 222-residue polypeptide: DNA-directed RNA polymerase V subunit 5A (222 aa).

This sequence belongs to the archaeal Rpo5/eukaryotic RPB5 RNA polymerase subunit family. In terms of assembly, component of the RNA polymerase V complex. As to expression, expressed in roots, leaves, siliques and seeds, and to a lower level, in flower buds and flowers.

It localises to the nucleus. In terms of biological role, DNA-dependent RNA polymerase catalyzes the transcription of DNA into RNA using the four ribonucleoside triphosphates as substrates. Component of RNA polymerase V involved in RNA-directed DNA methylation-dependent (RdDM) silencing of endogenous repeated sequences, including transposable elements. Required for establishment of DNA methylation. The chain is DNA-directed RNA polymerase V subunit 5A (NRPE5A) from Arabidopsis thaliana (Mouse-ear cress).